Here is a 466-residue protein sequence, read N- to C-terminus: Small RNA degrading nuclease 2 (466 aa).

In terms of domain architecture, Exonuclease spans 142 to 298 (MIAIDCEMVL…HDAEAAMKLV (157 aa)). A disordered region spans residues 426-466 (EENNASSKKRKRENHSKGTRDRRRCKPLSRRKQRSNVKRRR). Over residues 445 to 466 (RDRRRCKPLSRRKQRSNVKRRR) the composition is skewed to basic residues.

The protein belongs to the REXO1/REXO3 family.

The protein localises to the nucleus. Its function is as follows. 3'-5' exonuclease degrading single-stranded small RNAs. This chain is Small RNA degrading nuclease 2 (SDN2), found in Arabidopsis thaliana (Mouse-ear cress).